Here is a 117-residue protein sequence, read N- to C-terminus: Pterin-4-alpha-carbinolamine dehydratase 2 (117 aa).

3 positions are modified to N6-acetyllysine; alternate: Lys-101, Lys-105, and Lys-112. Lys-101, Lys-105, and Lys-112 each carry N6-succinyllysine; alternate.

The protein belongs to the pterin-4-alpha-carbinolamine dehydratase family. As to quaternary structure, homotetramer. Interacts with DYRK1B.

It carries out the reaction (4aS,6R)-4a-hydroxy-L-erythro-5,6,7,8-tetrahydrobiopterin = (6R)-L-erythro-6,7-dihydrobiopterin + H2O. Functionally, involved in tetrahydrobiopterin biosynthesis. Seems to both prevent the formation of 7-pterins and accelerate the formation of quinonoid-BH2. Regulates the dimerization of homeodomain protein HNF-1-alpha and enhances its transcriptional activity. In Pongo abelii (Sumatran orangutan), this protein is Pterin-4-alpha-carbinolamine dehydratase 2 (PCBD2).